The chain runs to 255 residues: Small ribosomal subunit protein eS1B (255 aa).

Position 2 is an N-acetylalanine; partial (alanine 2). A Phosphoserine modification is found at serine 245. Lysine 248 participates in a covalent cross-link: Glycyl lysine isopeptide (Lys-Gly) (interchain with G-Cter in ubiquitin). Threonine 254 is subject to Phosphothreonine.

This sequence belongs to the eukaryotic ribosomal protein eS1 family. As to quaternary structure, component of the small ribosomal subunit. Mature ribosomes consist of a small (40S) and a large (60S) subunit. The 40S subunit contains about 33 different proteins and 1 molecule of RNA (18S). The 60S subunit contains about 49 different proteins and 3 molecules of RNA (25S, 5.8S and 5S).

It is found in the cytoplasm. This is Small ribosomal subunit protein eS1B from Saccharomyces cerevisiae (strain RM11-1a) (Baker's yeast).